The sequence spans 135 residues: MKNLVRLLAVIALIIGSFWGKVPAQALNLTSIALPSLPVAVLNAADAKLTTEFGAKIDLNNSDIRDFRDLRGFYPNLAGKIIKNAPYEEVEDVLNIPGLSDTQKERLQANLEKFTVTEPSKEFIEGDDRFNPGVY.

The signal sequence occupies residues methionine 1–alanine 26.

It belongs to the PsbU family. PSII is composed of 1 copy each of membrane proteins PsbA, PsbB, PsbC, PsbD, PsbE, PsbF, PsbH, PsbI, PsbJ, PsbK, PsbL, PsbM, PsbT, PsbX, PsbY, PsbZ, Psb30/Ycf12, peripheral proteins PsbO, CyanoQ (PsbQ), PsbU, PsbV and a large number of cofactors. It forms dimeric complexes.

The protein resides in the cellular thylakoid membrane. Its function is as follows. One of the extrinsic, lumenal subunits of photosystem II (PSII). PSII is a light-driven water plastoquinone oxidoreductase, using light energy to abstract electrons from H(2)O, generating a proton gradient subsequently used for ATP formation. The extrinsic proteins stabilize the structure of photosystem II oxygen-evolving complex (OEC), the ion environment of oxygen evolution and protect the OEC against heat-induced inactivation. The polypeptide is Photosystem II extrinsic protein U (Microcystis aeruginosa (strain NIES-843 / IAM M-2473)).